A 62-amino-acid chain; its full sequence is Photosystem II reaction center protein Z (62 aa).

Helical transmembrane passes span alanine 8 to alanine 28 and phenylalanine 41 to isoleucine 61.

It belongs to the PsbZ family. PSII is composed of 1 copy each of membrane proteins PsbA, PsbB, PsbC, PsbD, PsbE, PsbF, PsbH, PsbI, PsbJ, PsbK, PsbL, PsbM, PsbT, PsbY, PsbZ, Psb30/Ycf12, at least 3 peripheral proteins of the oxygen-evolving complex and a large number of cofactors. It forms dimeric complexes.

The protein resides in the plastid. The protein localises to the chloroplast thylakoid membrane. Functionally, may control the interaction of photosystem II (PSII) cores with the light-harvesting antenna, regulates electron flow through the 2 photosystem reaction centers. PSII is a light-driven water plastoquinone oxidoreductase, using light energy to abstract electrons from H(2)O, generating a proton gradient subsequently used for ATP formation. The protein is Photosystem II reaction center protein Z of Calycanthus floridus var. glaucus (Eastern sweetshrub).